The sequence spans 581 residues: Threonine--tRNA ligase (581 aa).

The tract at residues 185 to 478 (DHRKLGKELD…LIEHYGGAFP (294 aa)) is catalytic. Zn(2+)-binding residues include cysteine 278, histidine 329, and histidine 455.

Belongs to the class-II aminoacyl-tRNA synthetase family. Homodimer. It depends on Zn(2+) as a cofactor.

It is found in the cytoplasm. The catalysed reaction is tRNA(Thr) + L-threonine + ATP = L-threonyl-tRNA(Thr) + AMP + diphosphate + H(+). Functionally, catalyzes the attachment of threonine to tRNA(Thr) in a two-step reaction: L-threonine is first activated by ATP to form Thr-AMP and then transferred to the acceptor end of tRNA(Thr). Also edits incorrectly charged L-seryl-tRNA(Thr). In Borreliella afzelii (strain PKo) (Borrelia afzelii), this protein is Threonine--tRNA ligase.